The following is a 524-amino-acid chain: MSALLREEDLNDFITPEVACIKPVSSKPSNGVDGELSVGKEPEKVEISLADCLACVGCITSSEEILLSRQNQDVFVKEWNEKKTEGYILSVSIAPQCRVSLSQYFGMGVLKFDQMFIRYLQEVWGARYVVGIQEGREESIKLMNEVADKGERKICSACPGFLMYCEKKQQDLLPLLIDVKSPMEITGHLLKDGNKEKMYHLSIMPCFDKKLESMRPESIGLVDCVITPKELVNLITPEQVDKYFATTKETIGMLEWEDAIQRVTPKWMNIDTSFKTNEGSSSGGFAWQYILHRRFQMSDNDNDNAYKIETVRGRNLDVTEFRLIDEEGKILVRSTQVFGFRNIQNLRRLVKDVKPRKLKRFIRKRPTANGNDNSISLSSSINNQDNNNTKVEEPVDFCKSDFLEVMACPRGCIAGGGNLKNGIKNGPDQDSDPNQDLNTVYMTSIPMTSIEPRHNLTLPSSQENVIVGVISHDLDDSNTIIKLQEEQKYGNKYKRKLYNPSSISETHNGDSKNTIEQPVQFTTW.

Positions 20, 52, 55, 58, 158, and 206 each coordinate [4Fe-4S] cluster. The interval 362–388 (IRKRPTANGNDNSISLSSSINNQDNNN) is disordered. Residues 369-388 (NGNDNSISLSSSINNQDNNN) are compositionally biased toward low complexity. [4Fe-4S] cluster is bound by residues C408 and C412. A disordered region spans residues 501 to 524 (SSISETHNGDSKNTIEQPVQFTTW).

Belongs to the NARF family.

Component of the cytosolic Fe/S protein assembly machinery. Required for maturation of extramitochondrial Fe/S proteins. May play a role in the transfer of pre-assembled Fe/S clusters to target apoproteins. This Vanderwaltozyma polyspora (strain ATCC 22028 / DSM 70294 / BCRC 21397 / CBS 2163 / NBRC 10782 / NRRL Y-8283 / UCD 57-17) (Kluyveromyces polysporus) protein is Cytosolic Fe-S cluster assembly factor NAR1 (NAR1).